A 203-amino-acid chain; its full sequence is Small ribosomal subunit protein uS4 (203 aa).

The interval L20–S45 is disordered. One can recognise an S4 RNA-binding domain in the interval M92–A155.

The protein belongs to the universal ribosomal protein uS4 family. As to quaternary structure, part of the 30S ribosomal subunit. Contacts protein S5. The interaction surface between S4 and S5 is involved in control of translational fidelity.

Its function is as follows. One of the primary rRNA binding proteins, it binds directly to 16S rRNA where it nucleates assembly of the body of the 30S subunit. Functionally, with S5 and S12 plays an important role in translational accuracy. The protein is Small ribosomal subunit protein uS4 of Synechococcus sp. (strain JA-3-3Ab) (Cyanobacteria bacterium Yellowstone A-Prime).